The sequence spans 592 residues: Alpha-1,3-galactosidase B (592 aa).

Residues 1–14 (MKLLSVLSLSLVLS) form the signal peptide. A lipid anchor (N-palmitoyl cysteine) is attached at cysteine 15. Cysteine 15 is lipidated: S-diacylglycerol cysteine. PbH1 repeat units follow at residues 429–451 (TPEV…LFST), 452–474 (PRKT…LLCG), and 485–538 (CRHV…VIED).

The protein belongs to the glycosyl hydrolase 110 family. B subfamily.

The protein resides in the cell membrane. It catalyses the reaction Hydrolysis of terminal, non-reducing branched (1-&gt;3)-alpha-D-galactosidic residues, producing free D-galactose.. The enzyme catalyses Hydrolysis of terminal, non-reducing linear (1-&gt;3)-alpha-D-galactosidic residues, producing free D-galactose.. The catalysed reaction is Hydrolysis of terminal, non-reducing alpha-D-galactose residues in alpha-D-galactosides, including galactose oligosaccharides, galactomannans and galactolipids.. In terms of biological role, alpha-galactosidase. Removes both branched alpha-1,3-linked galactose residues of blood group B antigens and linear alpha-1,3-linked galactose structures. The protein is Alpha-1,3-galactosidase B (glaB1) of Phocaeicola vulgatus (strain ATCC 8482 / DSM 1447 / JCM 5826 / CCUG 4940 / NBRC 14291 / NCTC 11154) (Bacteroides vulgatus).